The primary structure comprises 463 residues: Heterogeneous nuclear ribonucleoprotein K (463 aa).

An N-acetylmethionine modification is found at methionine 1. The tract at residues methionine 1–arginine 37 is disordered. The interval methionine 1–serine 276 is necessary for interaction with DDX1. The span at phenylalanine 19 to arginine 37 shows a compositional bias: basic and acidic residues. Lysine 34 carries the N6-acetyllysine; alternate modification. A Glycyl lysine isopeptide (Lys-Gly) (interchain with G-Cter in SUMO1); alternate cross-link involves residue lysine 34. A Glycyl lysine isopeptide (Lys-Gly) (interchain with G-Cter in SUMO2); alternate cross-link involves residue lysine 34. Residues arginine 35–glycine 197 form an interaction with ASFV p30 region. Serine 36 carries the phosphoserine modification. Threonine 39 carries the post-translational modification Phosphothreonine. Residues methionine 42–isoleucine 104 form the KH 1 domain. Glycyl lysine isopeptide (Lys-Gly) (interchain with G-Cter in SUMO2) cross-links involve residues lysine 52 and lysine 60. 2 tandem repeats follow at residues alanine 54–valine 76 and glycine 59–glycine 62. The tract at residues alanine 54–isoleucine 421 is 2 X 22 AA approximate repeats. The interval glycine 59–glycine 407 is 5 X 4 AA repeats of G-X-G-G. Serine 75 and serine 116 each carry phosphoserine. The 66-residue stretch at aspartate 144–isoleucine 209 folds into the KH 2 domain. Lysine 163 is covalently cross-linked (Glycyl lysine isopeptide (Lys-Gly) (interchain with G-Cter in SUMO1); alternate). A Glycyl lysine isopeptide (Lys-Gly) (interchain with G-Cter in SUMO2); alternate cross-link involves residue lysine 163. N6-acetyllysine is present on lysine 198. The interval isoleucine 209–valine 337 is interaction with ZIK1. Residues serine 214 and serine 216 each carry the phosphoserine modification. Lysine 219 participates in a covalent cross-link: Glycyl lysine isopeptide (Lys-Gly) (interchain with G-Cter in SUMO2); alternate. N6-succinyllysine; alternate is present on lysine 219. The interval tyrosine 236–methionine 273 is RNA-binding RGG-box. 3 repeat units span residues aspartate 245–proline 250, glycine 257–glycine 260, and glycine 267–glycine 270. A 2 X 6 AA approximate repeats region spans residues aspartate 245–proline 329. The segment at proline 250 to proline 329 is disordered. Low complexity predominate over residues glycine 252–proline 266. Over residues serine 276–proline 285 the composition is skewed to basic and acidic residues. Serine 284 is subject to Phosphoserine. A 3-4 repeat occupies glycine 295–glycine 298. Residue arginine 316 is modified to Omega-N-methylarginine. The stretch at aspartate 324–proline 329 is one 2-2 repeat. Arginine 377 is subject to Omega-N-methylarginine. Position 379 is a phosphoserine (serine 379). Tyrosine 380 is modified (phosphotyrosine). The KH 3 domain maps to isoleucine 387 to leucine 451. A run of 2 repeats spans residues alanine 399 to isoleucine 421 and glycine 404 to glycine 407. An N6-acetyllysine; alternate modification is found at lysine 405. A Glycyl lysine isopeptide (Lys-Gly) (interchain with G-Cter in SUMO2); alternate cross-link involves residue lysine 405. Serine 420 bears the Phosphoserine mark. Lysine 422 participates in a covalent cross-link: Glycyl lysine isopeptide (Lys-Gly) (interchain with G-Cter in SUMO1); alternate. Lysine 422 is covalently cross-linked (Glycyl lysine isopeptide (Lys-Gly) (interchain with G-Cter in SUMO2); alternate). Lysine 422 is covalently cross-linked (Glycyl lysine isopeptide (Lys-Gly) (interchain with G-Cter in SUMO); alternate).

Identified in the spliceosome C complex. Part of a transcription inhibitory ribonucleoprotein complex composed at least of the circular RNA circZNF827, ZNF827 and HNRNPL. Interacts with RBM42 and ZIK1. Interacts with BRDT. Interacts with ANKRD28. Interacts with ASFV p30 protein. Interacts with DDX1. Interacts with MDM2; this interaction leads to ubiquitination and proteasomal degradation. Interacts with p53/TP53. Interacts with IVNS1ABP (via BACK domain); the interaction is direct. Interacts with PPIA/CYPA. As to quaternary structure, (Microbial infection) Interacts with HCV core protein. Arg-296 and Arg-299 are dimethylated, probably to asymmetric dimethylarginine. Post-translationally, sumoylated by CBX4. Sumoylation is increased upon DNA damage, such as that produced by doxorubicin, etoposide, UV light and camptothecin, due to enhanced CBX4 phosphorylation by HIPK2 under these conditions. In terms of processing, ubiquitinated by MDM2. Doxorubicin treatment does not affect monoubiquitination, but slightly decreases HNRNPK poly-ubiquitination. O-glycosylated (O-GlcNAcylated), in a cell cycle-dependent manner.

The protein localises to the cytoplasm. It is found in the nucleus. Its subcellular location is the nucleoplasm. The protein resides in the cell projection. It localises to the podosome. One of the major pre-mRNA-binding proteins. Binds tenaciously to poly(C) sequences. Likely to play a role in the nuclear metabolism of hnRNAs, particularly for pre-mRNAs that contain cytidine-rich sequences. Can also bind poly(C) single-stranded DNA. Plays an important role in p53/TP53 response to DNA damage, acting at the level of both transcription activation and repression. When sumoylated, acts as a transcriptional coactivator of p53/TP53, playing a role in p21/CDKN1A and 14-3-3 sigma/SFN induction. As far as transcription repression is concerned, acts by interacting with long intergenic RNA p21 (lincRNA-p21), a non-coding RNA induced by p53/TP53. This interaction is necessary for the induction of apoptosis, but not cell cycle arrest. As part of a ribonucleoprotein complex composed at least of ZNF827, HNRNPL and the circular RNA circZNF827 that nucleates the complex on chromatin, may negatively regulate the transcription of genes involved in neuronal differentiation. The protein is Heterogeneous nuclear ribonucleoprotein K (HNRNPK) of Homo sapiens (Human).